We begin with the raw amino-acid sequence, 208 residues long: N-(5'-phosphoribosyl)anthranilate isomerase (208 aa).

Belongs to the TrpF family.

It catalyses the reaction N-(5-phospho-beta-D-ribosyl)anthranilate = 1-(2-carboxyphenylamino)-1-deoxy-D-ribulose 5-phosphate. Its pathway is amino-acid biosynthesis; L-tryptophan biosynthesis; L-tryptophan from chorismate: step 3/5. This chain is N-(5'-phosphoribosyl)anthranilate isomerase, found in Chlamydia trachomatis serovar A (strain ATCC VR-571B / DSM 19440 / HAR-13).